The primary structure comprises 377 residues: Carbamoyl phosphate synthase small chain (377 aa).

Positions 1-186 (MNTPALLVLA…LGKGFVTPDK (186 aa)) are CPSase. L-glutamine is bound by residues serine 47, glycine 238, and glycine 240. Positions 190 to 377 (HVVAYDFGVK…IGNMKAAKQA (188 aa)) constitute a Glutamine amidotransferase type-1 domain. Catalysis depends on cysteine 266, which acts as the Nucleophile. L-glutamine is bound by residues leucine 267, glutamine 270, asparagine 308, glycine 310, and phenylalanine 311. Catalysis depends on residues histidine 350 and glutamate 352.

This sequence belongs to the CarA family. Composed of two chains; the small (or glutamine) chain promotes the hydrolysis of glutamine to ammonia, which is used by the large (or ammonia) chain to synthesize carbamoyl phosphate. Tetramer of heterodimers (alpha,beta)4.

It carries out the reaction hydrogencarbonate + L-glutamine + 2 ATP + H2O = carbamoyl phosphate + L-glutamate + 2 ADP + phosphate + 2 H(+). The catalysed reaction is L-glutamine + H2O = L-glutamate + NH4(+). The protein operates within amino-acid biosynthesis; L-arginine biosynthesis; carbamoyl phosphate from bicarbonate: step 1/1. It participates in pyrimidine metabolism; UMP biosynthesis via de novo pathway; (S)-dihydroorotate from bicarbonate: step 1/3. In terms of biological role, small subunit of the glutamine-dependent carbamoyl phosphate synthetase (CPSase). CPSase catalyzes the formation of carbamoyl phosphate from the ammonia moiety of glutamine, carbonate, and phosphate donated by ATP, constituting the first step of 2 biosynthetic pathways, one leading to arginine and/or urea and the other to pyrimidine nucleotides. The small subunit (glutamine amidotransferase) binds and cleaves glutamine to supply the large subunit with the substrate ammonia. This chain is Carbamoyl phosphate synthase small chain, found in Neisseria gonorrhoeae.